A 177-amino-acid polypeptide reads, in one-letter code: Putative adenylate kinase (177 aa).

Residues G10, G12, K13, T14, and T15 each contribute to the ATP site. The segment at 30 to 50 (NLRDYALEKGIGEMKENELEI) is NMP. Positions 99 to 109 (ERGYGREKLGE) are LID. R100 and K138 together coordinate ATP.

Belongs to the adenylate kinase family. AK6 subfamily. In terms of assembly, interacts with uS11. Not a structural component of 40S pre-ribosomes, but transiently interacts with them by binding to uS11.

It carries out the reaction AMP + ATP = 2 ADP. The catalysed reaction is ATP + H2O = ADP + phosphate + H(+). In terms of biological role, broad-specificity nucleoside monophosphate (NMP) kinase that catalyzes the reversible transfer of the terminal phosphate group between nucleoside triphosphates and monophosphates. Also has ATPase activity. Involved in the late maturation steps of the 30S ribosomal particles, specifically 16S rRNA maturation. While NMP activity is not required for ribosome maturation, ATPase activity is. Associates transiently with small ribosomal subunit protein uS11. ATP hydrolysis breaks the interaction with uS11. May temporarily remove uS11 from the ribosome to enable a conformational change of the ribosomal RNA that is needed for the final maturation step of the small ribosomal subunit. In Thermococcus kodakarensis (strain ATCC BAA-918 / JCM 12380 / KOD1) (Pyrococcus kodakaraensis (strain KOD1)), this protein is Putative adenylate kinase.